Reading from the N-terminus, the 213-residue chain is Protein FAM156A/FAM156B (213 aa).

Met1 carries the N-acetylmethionine modification. A disordered region spans residues 1-62; the sequence is MDPLQKRNPA…SQAVPLPEGL (62 aa). The span at 8–37 shows a compositional bias: polar residues; that stretch reads NPASPSKSSPMTAAETSQEGPAPSQPSYSE. Ser114 bears the Phosphoserine mark. A helical membrane pass occupies residues 154 to 170; that stretch reads WETLVQGLSGLTLSLGT. The interval 165-198 is disordered; the sequence is TLSLGTNQPGPLPEAALQPQETEEKRQRERQQES. Residues 186-197 show a composition bias toward basic and acidic residues; it reads TEEKRQRERQQE.

Its subcellular location is the membrane. The polypeptide is Protein FAM156A/FAM156B (FAM156A) (Homo sapiens (Human)).